Here is a 154-residue protein sequence, read N- to C-terminus: Anaerobic ribonucleoside-triphosphate reductase-activating protein (154 aa).

3 residues coordinate [4Fe-4S] cluster: Cys26, Cys30, and Cys33. S-adenosyl-L-methionine is bound by residues Gly32–Tyr34 and Gly74.

It belongs to the organic radical-activating enzymes family. In terms of assembly, forms a tetramer composed of two NrdD and two NrdG subunits. [4Fe-4S] cluster serves as cofactor.

It localises to the cytoplasm. The catalysed reaction is glycyl-[protein] + reduced [flavodoxin] + S-adenosyl-L-methionine = glycin-2-yl radical-[protein] + semiquinone [flavodoxin] + 5'-deoxyadenosine + L-methionine + H(+). Activation of anaerobic ribonucleoside-triphosphate reductase under anaerobic conditions by generation of an organic free radical, using S-adenosylmethionine and reduced flavodoxin as cosubstrates to produce 5'-deoxy-adenosine. The sequence is that of Anaerobic ribonucleoside-triphosphate reductase-activating protein (nrdG) from Salmonella typhimurium (strain LT2 / SGSC1412 / ATCC 700720).